The primary structure comprises 326 residues: Biotin synthase (326 aa).

The Radical SAM core domain maps to 47-274 (NEVQVSSLLS…ASRVRLSAGR (228 aa)). 3 residues coordinate [4Fe-4S] cluster: Cys62, Cys66, and Cys69. The [2Fe-2S] cluster site is built by Cys106, Cys137, Cys197, and Arg269.

Belongs to the radical SAM superfamily. Biotin synthase family. Homodimer. The cofactor is [4Fe-4S] cluster. It depends on [2Fe-2S] cluster as a cofactor.

The catalysed reaction is (4R,5S)-dethiobiotin + (sulfur carrier)-SH + 2 reduced [2Fe-2S]-[ferredoxin] + 2 S-adenosyl-L-methionine = (sulfur carrier)-H + biotin + 2 5'-deoxyadenosine + 2 L-methionine + 2 oxidized [2Fe-2S]-[ferredoxin]. It participates in cofactor biosynthesis; biotin biosynthesis; biotin from 7,8-diaminononanoate: step 2/2. Functionally, catalyzes the conversion of dethiobiotin (DTB) to biotin by the insertion of a sulfur atom into dethiobiotin via a radical-based mechanism. The chain is Biotin synthase from Methylococcus capsulatus (strain ATCC 33009 / NCIMB 11132 / Bath).